The chain runs to 518 residues: Cytokinin hydroxylase (518 aa).

A helical transmembrane segment spans residues 1–21 (MLLTILKSLLVIFVTTILRVL). Cysteine 464 is a binding site for heme.

The protein belongs to the cytochrome P450 family. It depends on heme as a cofactor. As to expression, expressed in roots and flowers.

It localises to the membrane. It carries out the reaction N(6)-(dimethylallyl)adenosine 5'-phosphate + NADPH + O2 + H(+) = 9-ribosyl-trans-zeatin 5'-phosphate + NADP(+) + H2O. The enzyme catalyses N(6)-(dimethylallyl)adenosine 5'-diphosphate + NADPH + O2 + H(+) = 9-ribosyl-trans-zeatin 5'-diphosphate + NADP(+) + H2O. The catalysed reaction is N(6)-(dimethylallyl)adenosine 5'-triphosphate + NADPH + O2 + H(+) = 9-ribosyl-trans-zeatin 5'-triphosphate + NADP(+) + H2O. Its function is as follows. Cytokinin hydroxylase that catalyzes the biosynthesis of trans-zeatin via the isopentenyladenine riboside 5'-monophosphate (iPRMP)-dependent pathway. Can use isopentenyladenosine-5'-monophosphate, isopentenyladenosine-5'-diphosphate and isopentenyladenosine-5'-triphosphate as substrate. This chain is Cytokinin hydroxylase (CYP735A1), found in Arabidopsis thaliana (Mouse-ear cress).